We begin with the raw amino-acid sequence, 135 residues long: Small ribosomal subunit protein bS18 (135 aa).

Residues 1 to 65 are disordered; sequence MARPDMGGPK…GDEGGGRRGF (65 aa). A compositionally biased stretch (gly residues) spans 9-41; it reads PKTGGFGGPRSGGFGGGGGGGGGFGGGGFGGGR. Basic and acidic residues predominate over residues 42–61; that stretch reads GGDRGDRGDRDDRGGDEGGG.

The protein belongs to the bacterial ribosomal protein bS18 family. Part of the 30S ribosomal subunit. Forms a tight heterodimer with protein bS6.

In terms of biological role, binds as a heterodimer with protein bS6 to the central domain of the 16S rRNA, where it helps stabilize the platform of the 30S subunit. The sequence is that of Small ribosomal subunit protein bS18 from Anaeromyxobacter sp. (strain K).